A 196-amino-acid chain; its full sequence is Ribosome maturation factor RimP (196 aa).

The protein belongs to the RimP family.

The protein localises to the cytoplasm. In terms of biological role, required for maturation of 30S ribosomal subunits. The sequence is that of Ribosome maturation factor RimP from Lawsonia intracellularis (strain PHE/MN1-00).